The primary structure comprises 312 residues: Porphobilinogen deaminase (312 aa).

Cys241 is subject to S-(dipyrrolylmethanemethyl)cysteine.

Belongs to the HMBS family. In terms of assembly, monomer. Dipyrromethane serves as cofactor.

It catalyses the reaction 4 porphobilinogen + H2O = hydroxymethylbilane + 4 NH4(+). Its pathway is porphyrin-containing compound metabolism; protoporphyrin-IX biosynthesis; coproporphyrinogen-III from 5-aminolevulinate: step 2/4. Its function is as follows. Tetrapolymerization of the monopyrrole PBG into the hydroxymethylbilane pre-uroporphyrinogen in several discrete steps. The sequence is that of Porphobilinogen deaminase from Cytophaga hutchinsonii (strain ATCC 33406 / DSM 1761 / CIP 103989 / NBRC 15051 / NCIMB 9469 / D465).